Here is a 534-residue protein sequence, read N- to C-terminus: GTPase Obg (534 aa).

The 158-residue stretch at 2-159 (ASFVDRVVLH…SDIVLELKSI (158 aa)) folds into the Obg domain. Residues 63-82 (APHRHASNGGQGMGDWRGGK) are disordered. Residues 71–82 (GGQGMGDWRGGK) show a composition bias toward gly residues. In terms of domain architecture, OBG-type G spans 160–343 (ADIALVGFPS…LSFAMAELVT (184 aa)). GTP contacts are provided by residues 166–173 (GFPSAGKS), 191–195 (FTTLI), 212–215 (DVPG), 295–298 (NKID), and 324–326 (SAS). Positions 173 and 193 each coordinate Mg(2+). The OCT domain occupies 363–449 (PRAVNRKEFT…ENAVVFDWEP (87 aa)). Positions 456–534 (ELLSGPRGTD…AASTDDGDAL (79 aa)) are disordered. Composition is skewed to basic and acidic residues over residues 464–504 (TDPR…ERKA) and 512–526 (SARR…REAA).

The protein belongs to the TRAFAC class OBG-HflX-like GTPase superfamily. OBG GTPase family. In terms of assembly, monomer. It depends on Mg(2+) as a cofactor.

The protein localises to the cytoplasm. Functionally, an essential GTPase which binds GTP, GDP and possibly (p)ppGpp with moderate affinity, with high nucleotide exchange rates and a fairly low GTP hydrolysis rate. Plays a role in control of the cell cycle, stress response, ribosome biogenesis and in those bacteria that undergo differentiation, in morphogenesis control. This chain is GTPase Obg, found in Renibacterium salmoninarum (strain ATCC 33209 / DSM 20767 / JCM 11484 / NBRC 15589 / NCIMB 2235).